The primary structure comprises 90 residues: UPF0367 protein Ava_2513 (90 aa).

It belongs to the UPF0367 family.

The sequence is that of UPF0367 protein Ava_2513 from Trichormus variabilis (strain ATCC 29413 / PCC 7937) (Anabaena variabilis).